A 181-amino-acid chain; its full sequence is Protein Syd (181 aa).

This sequence belongs to the Syd family.

The protein localises to the cell inner membrane. Functionally, interacts with the SecY protein in vivo. May bind preferentially to an uncomplexed state of SecY, thus functioning either as a chelating agent for excess SecY in the cell or as a regulatory factor that negatively controls the translocase function. The chain is Protein Syd from Klebsiella pneumoniae subsp. pneumoniae (strain ATCC 700721 / MGH 78578).